The primary structure comprises 221 residues: Putative N-acetylmannosamine-6-phosphate 2-epimerase (221 aa).

Belongs to the NanE family.

The catalysed reaction is an N-acyl-D-glucosamine 6-phosphate = an N-acyl-D-mannosamine 6-phosphate. It participates in amino-sugar metabolism; N-acetylneuraminate degradation; D-fructose 6-phosphate from N-acetylneuraminate: step 3/5. Functionally, converts N-acetylmannosamine-6-phosphate (ManNAc-6-P) to N-acetylglucosamine-6-phosphate (GlcNAc-6-P). The protein is Putative N-acetylmannosamine-6-phosphate 2-epimerase of Clostridium perfringens (strain ATCC 13124 / DSM 756 / JCM 1290 / NCIMB 6125 / NCTC 8237 / Type A).